The sequence spans 206 residues: Small ribosomal subunit protein uS4 (206 aa).

One can recognise an S4 RNA-binding domain in the interval Thr-98–Val-155.

This sequence belongs to the universal ribosomal protein uS4 family. As to quaternary structure, part of the 30S ribosomal subunit. Contacts protein S5. The interaction surface between S4 and S5 is involved in control of translational fidelity.

Its function is as follows. One of the primary rRNA binding proteins, it binds directly to 16S rRNA where it nucleates assembly of the body of the 30S subunit. In terms of biological role, with S5 and S12 plays an important role in translational accuracy. This is Small ribosomal subunit protein uS4 from Dictyoglomus turgidum (strain DSM 6724 / Z-1310).